Reading from the N-terminus, the 292-residue chain is Homoserine kinase (292 aa).

81-91 lines the ATP pocket; the sequence is RPRSGLGSSGA.

Belongs to the GHMP kinase family. Homoserine kinase subfamily.

It is found in the cytoplasm. The catalysed reaction is L-homoserine + ATP = O-phospho-L-homoserine + ADP + H(+). It functions in the pathway amino-acid biosynthesis; L-threonine biosynthesis; L-threonine from L-aspartate: step 4/5. Catalyzes the ATP-dependent phosphorylation of L-homoserine to L-homoserine phosphate. The protein is Homoserine kinase of Thermococcus gammatolerans (strain DSM 15229 / JCM 11827 / EJ3).